Here is a 581-residue protein sequence, read N- to C-terminus: Ketol-acid reductoisomerase, chloroplastic (581 aa).

Residues 1 to 50 constitute a chloroplast transit peptide; sequence MAAVTSSCSTAISASSKTLAKPVAASFAPTNLSFSKLSPQSIRARRSITV. Residues 92 to 290 form the KARI N-terminal Rossmann domain; that stretch reads VRGGRDLFHL…ALGSPFTFAT (199 aa). NADP(+)-binding positions include 113–120, 146–151, and 185–189; these read GVIGWGSQ, RKGSSS, and SDSAQ. Histidine 210 is an active-site residue. KARI C-terminal knotted domains follow at residues 291–439 and 440–576; these read TLEQ…RPAG and DLGP…RPEL. Aspartate 299, glutamate 303, glutamate 476, and glutamate 480 together coordinate Mg(2+). Serine 502 contacts substrate.

The protein belongs to the ketol-acid reductoisomerase family. As to quaternary structure, homodimer. The cofactor is Mg(2+).

Its subcellular location is the plastid. The protein resides in the chloroplast. The enzyme catalyses (2R)-2,3-dihydroxy-3-methylbutanoate + NADP(+) = (2S)-2-acetolactate + NADPH + H(+). It carries out the reaction (2R,3R)-2,3-dihydroxy-3-methylpentanoate + NADP(+) = (S)-2-ethyl-2-hydroxy-3-oxobutanoate + NADPH + H(+). Its pathway is amino-acid biosynthesis; L-isoleucine biosynthesis; L-isoleucine from 2-oxobutanoate: step 2/4. It participates in amino-acid biosynthesis; L-valine biosynthesis; L-valine from pyruvate: step 2/4. The sequence is that of Ketol-acid reductoisomerase, chloroplastic (PGAAIR) from Pisum sativum (Garden pea).